Reading from the N-terminus, the 440-residue chain is D-serine dehydratase (440 aa).

At Lys-116 the chain carries N6-(pyridoxal phosphate)lysine.

It belongs to the serine/threonine dehydratase family. DsdA subfamily. Monomer. It depends on pyridoxal 5'-phosphate as a cofactor.

The catalysed reaction is D-serine = pyruvate + NH4(+). In Salmonella enteritidis PT4 (strain P125109), this protein is D-serine dehydratase.